The chain runs to 336 residues: Atypical chemokine receptor 1 (336 aa).

The segment at 1–30 is mediates Plasmodium vivax Duffy receptor (PVDR) binding; sequence MGNCLHRAELSPSTENSSQLDFEDVWNSSY. Topologically, residues 1–63 are extracellular; that stretch reads MGNCLHRAEL…CNLLDDSALP (63 aa). An N-linked (GlcNAc...) asparagine glycan is attached at N16. Y30 bears the Sulfotyrosine mark. Residue N33 is glycosylated (N-linked (GlcNAc...) asparagine). At Y41 the chain carries Sulfotyrosine. Disulfide bonds link C51–C276 and C129–C195. Residues 64 to 84 form a helical membrane-spanning segment; it reads FFILTSVLGILASSTVLFMLF. The Cytoplasmic portion of the chain corresponds to 85 to 95; the sequence is RPLFRWQLCPG. The helical transmembrane segment at 96-116 threads the bilayer; sequence WPVLAQLAVGSALFSIVVPVL. Over 117-129 the chain is Extracellular; it reads APGLGSTRSSALC. A helical transmembrane segment spans residues 130–153; it reads SLGYCVWYGSAFAQALLLGCHASL. Over 154–166 the chain is Cytoplasmic; the sequence is GHRLGAGQVPGLT. The chain crosses the membrane as a helical span at residues 167–187; the sequence is LGLTVGIWGVAALLTLPVTLA. Residues 188 to 207 lie on the Extracellular side of the membrane; sequence SGASGGLCTLIYSTELKALQ. A helical transmembrane segment spans residues 208-228; the sequence is ATHTVACLAIFVLLPLGLFGA. The Cytoplasmic portion of the chain corresponds to 229–244; it reads KGLKKALGMGPGPWMN. A helical transmembrane segment spans residues 245–265; sequence ILWAWFIFWWPHGVVLGLDFL. At 266–287 the chain is on the extracellular side; sequence VRSKLLLLSTCLAQQALDLLLN. The helical transmembrane segment at 288-308 threads the bilayer; that stretch reads LAEALAILHCVATPLLLALFC. Residues 309-336 are Cytoplasmic-facing; it reads HQATRTLLPSLPLPEGWSSHLDTLGSKS.

This sequence belongs to the G-protein coupled receptor 1 family. Atypical chemokine receptor subfamily. In terms of assembly, (Microbial infection) Interacts (via N-terminal extracellular domain) with Plasmodium vivax Duffy receptor (PVDR) (via PvRII region). As to quaternary structure, (Microbial infection) Interacts (via N-terminal extracellular domain) with Plasmodium knowlesi Duffy receptor alpha form (DBPalpha) (via region II). Sulfation at Tyr-41 facilitates interaction with MGSA/CXCL1, RANTES/CCL5 and MCP-1/CCL2 but not IL8/CXCL8. Sulfation at Tyr-30 facilitates interaction with IL8/CXCL8. In terms of processing, (Microbial infection) Sulfation at Tyr-41 facilitates interaction with Plasmodium vivax Duffy receptor (PVDR). Sulfation at Tyr-30/Tyr-41 and Tyr-41 alone increases binding affinity of Plasmodium vivax parasites and likely promotes invasion of red blood cells. Post-translationally, (Microbial infection) Sulfation at Tyr-41 facilitates interaction with Plasmodium knowlesi Duffy receptor alpha form (DBPalpha). Sulfation at Tyr-30/Tyr-41 and Tyr-41 alone increases binding affinity of Plasmodium knowlesi parasites and likely promotes invasion of red blood cells. In terms of tissue distribution, found in adult kidney, adult spleen, bone marrow and fetal liver. In particular, it is expressed along postcapillary venules throughout the body, except in the adult liver. Erythroid cells and postcapillary venule endothelium are the principle tissues expressing duffy. Fy(-A-B) individuals do not express duffy in the bone marrow, however they do, in postcapillary venule endothelium.

Its subcellular location is the early endosome. It localises to the recycling endosome. The protein localises to the membrane. Functionally, atypical chemokine receptor that controls chemokine levels and localization via high-affinity chemokine binding that is uncoupled from classic ligand-driven signal transduction cascades, resulting instead in chemokine sequestration, degradation, or transcytosis. Also known as interceptor (internalizing receptor) or chemokine-scavenging receptor or chemokine decoy receptor. Has a promiscuous chemokine-binding profile, interacting with inflammatory chemokines of both the CXC and the CC subfamilies but not with homeostatic chemokines. Acts as a receptor for chemokines including CCL2, CCL5, CCL7, CCL11, CCL13, CCL14, CCL17, CXCL5, CXCL6, IL8/CXCL8, CXCL11, GRO, RANTES, MCP-1 and TARC. May regulate chemokine bioavailability and, consequently, leukocyte recruitment through two distinct mechanisms: when expressed in endothelial cells, it sustains the abluminal to luminal transcytosis of tissue-derived chemokines and their subsequent presentation to circulating leukocytes; when expressed in erythrocytes, serves as blood reservoir of cognate chemokines but also as a chemokine sink, buffering potential surges in plasma chemokine levels. In terms of biological role, (Microbial infection) Acts as a receptor for the malaria parasite Plasmodium vivax. (Microbial infection) Acts as a receptor for the malaria parasite Plasmodium knowlesi. This chain is Atypical chemokine receptor 1 (ACKR1), found in Homo sapiens (Human).